Reading from the N-terminus, the 277-residue chain is Bifunctional protein FolD (277 aa).

NADP(+) contacts are provided by residues 159 to 161 (GRS), Ser-184, and Ile-225.

This sequence belongs to the tetrahydrofolate dehydrogenase/cyclohydrolase family. As to quaternary structure, homodimer.

It carries out the reaction (6R)-5,10-methylene-5,6,7,8-tetrahydrofolate + NADP(+) = (6R)-5,10-methenyltetrahydrofolate + NADPH. It catalyses the reaction (6R)-5,10-methenyltetrahydrofolate + H2O = (6R)-10-formyltetrahydrofolate + H(+). The protein operates within one-carbon metabolism; tetrahydrofolate interconversion. Functionally, catalyzes the oxidation of 5,10-methylenetetrahydrofolate to 5,10-methenyltetrahydrofolate and then the hydrolysis of 5,10-methenyltetrahydrofolate to 10-formyltetrahydrofolate. In Acholeplasma laidlawii (strain PG-8A), this protein is Bifunctional protein FolD.